A 382-amino-acid polypeptide reads, in one-letter code: Cell division protein DivIB (382 aa).

Topologically, residues 1–103 (MAKDKEKQSD…SATQIAFQKS (103 aa)) are cytoplasmic. 2 stretches are compositionally biased toward basic and acidic residues: residues 36 to 49 (EKKL…DKKA) and 60 to 70 (VELKTDEKTDS). The segment at 36–92 (EKKLKEKLLSDKKAQQQAQNASEAVELKTDEKTDSQEIESETTSKPKKTKKVRQPKE) is disordered. The helical transmembrane segment at 104-124 (LPVLLGALLLMAVSIFMITPY) threads the bilayer. In terms of domain architecture, POTRA spans 125 to 196 (SKKKEFSVRG…NHFLFNVIEF (72 aa)). The Extracellular portion of the chain corresponds to 125–382 (SKKKEFSVRG…PETVLEQAHG (258 aa)). Positions 322–382 (QEIENQPEVP…PETVLEQAHG (61 aa)) are disordered. Basic and acidic residues predominate over residues 338–352 (AADKEGDKPGEHQEQ).

It belongs to the FtsQ/DivIB family. DivIB subfamily.

The protein resides in the cell membrane. Cell division protein that may be involved in stabilizing or promoting the assembly of the division complex. This chain is Cell division protein DivIB, found in Streptococcus pyogenes serotype M2 (strain MGAS10270).